Here is a 118-residue protein sequence, read N- to C-terminus: Large ribosomal subunit protein bL21c (118 aa).

It belongs to the bacterial ribosomal protein bL21 family. In terms of assembly, part of the 50S ribosomal subunit.

It is found in the plastid. The protein localises to the chloroplast. Its function is as follows. This protein binds to 23S rRNA. The sequence is that of Large ribosomal subunit protein bL21c from Zygnema circumcarinatum (Green alga).